Reading from the N-terminus, the 611-residue chain is Calmegin (611 aa).

The N-terminal stretch at 1 to 19 is a signal peptide; sequence MRFQGVGLCLGLLFITVNA. Over 20-471 the chain is Lumenal; it reads DFMDDGVEVE…LVIAAEERPW (452 aa). An N6-acetyllysine modification is found at Lys128. A disulfide bridge links Cys151 with Cys185. The tract at residues 254–335 is disordered; the sequence is LDDVVPPINP…KAEKPEDWSD (82 aa). Residues 265 to 284 show a composition bias toward basic and acidic residues; sequence REIDDPSDKKPEEWDDRAKI. A run of 8 repeats spans residues 267–280, 284–297, 303–316, 322–335, 339–352, 356–369, 370–383, and 384–397. Residues 317 to 350 are interaction with PPIB; that stretch reads DEPKFIPNPKAEKPEDWSDDMDGEWEAPHIPNPA. The cysteines at positions 351 and 355 are disulfide-linked. The chain crosses the membrane as a helical span at residues 472–492; it reads LWLMYLVMAGLPVALVASFCW. The Cytoplasmic segment spans residues 493–611; it reads PRKVKKKYED…SLRKRRVRKD (119 aa). Residues 517 to 611 form a disordered region; that stretch reads AALEQEAEEE…SLRKRRVRKD (95 aa). The span at 526-584 shows a compositional bias: basic and acidic residues; it reads EKAPEKPEDVQEEKKPGEAEVVTVEKEVIGEPEEKSKEDRETLEGQEEVSKLSKSGSED. 7 positions are modified to phosphoserine: Ser561, Ser578, Ser580, Ser582, Ser592, Ser595, and Ser602. The span at 602-611 shows a compositional bias: basic residues; the sequence is SLRKRRVRKD.

Belongs to the calreticulin family. Interacts with PDILT and PPIB. Interacts with ADAM2. Interacts with ADAM1A, ADAM1B and ADAM3; these are protein-coding genes in mouse but may be pseudogenes in other organisms. In terms of tissue distribution, detected in testis (at protein level). Detected in testis.

It localises to the endoplasmic reticulum membrane. Functions during spermatogenesis as a chaperone for a range of client proteins that are important for sperm adhesion onto the egg zona pellucida and for subsequent penetration of the zona pellucida. Required for normal sperm migration from the uterus into the oviduct. Required for normal male fertility. Binds calcium ions. This chain is Calmegin (Clgn), found in Mus musculus (Mouse).